The primary structure comprises 448 residues: Probable glycine dehydrogenase (decarboxylating) subunit 1 (448 aa).

It belongs to the GcvP family. N-terminal subunit subfamily. In terms of assembly, the glycine cleavage system is composed of four proteins: P, T, L and H. In this organism, the P 'protein' is a heterodimer of two subunits.

It carries out the reaction N(6)-[(R)-lipoyl]-L-lysyl-[glycine-cleavage complex H protein] + glycine + H(+) = N(6)-[(R)-S(8)-aminomethyldihydrolipoyl]-L-lysyl-[glycine-cleavage complex H protein] + CO2. Its function is as follows. The glycine cleavage system catalyzes the degradation of glycine. The P protein binds the alpha-amino group of glycine through its pyridoxal phosphate cofactor; CO(2) is released and the remaining methylamine moiety is then transferred to the lipoamide cofactor of the H protein. This chain is Probable glycine dehydrogenase (decarboxylating) subunit 1, found in Listeria monocytogenes serovar 1/2a (strain ATCC BAA-679 / EGD-e).